Reading from the N-terminus, the 295-residue chain is Tyrosine recombinase XerD (295 aa).

The region spanning 1-85 is the Core-binding (CB) domain; sequence MDTIIEEYLK…TIRSFHQFAL (85 aa). Residues 106 to 289 enclose the Tyr recombinase domain; the sequence is KLPDVLEINE…SKSQIRKMYN (184 aa). Active-site residues include R146, K170, H241, R244, and H267. Y276 acts as the O-(3'-phospho-DNA)-tyrosine intermediate in catalysis.

The protein belongs to the 'phage' integrase family. XerD subfamily. As to quaternary structure, forms a cyclic heterotetrameric complex composed of two molecules of XerC and two molecules of XerD.

The protein localises to the cytoplasm. Site-specific tyrosine recombinase, which acts by catalyzing the cutting and rejoining of the recombining DNA molecules. The XerC-XerD complex is essential to convert dimers of the bacterial chromosome into monomers to permit their segregation at cell division. It also contributes to the segregational stability of plasmids. In Staphylococcus saprophyticus subsp. saprophyticus (strain ATCC 15305 / DSM 20229 / NCIMB 8711 / NCTC 7292 / S-41), this protein is Tyrosine recombinase XerD.